Reading from the N-terminus, the 431-residue chain is MAACSRGLVARPFDLTARGAAHWPCPAPRRRAIRCCCRAQQEPRRRLSKAAAAAPERTEEWRIDGNKPAAAARGRRRASLTAMPSLPFPSPRSRRQWKQQNFYPRCTPRGPAPQSRDTPPKRDTGIASEKEWGINLLDEAVKESGTNEDGSTWYRESGDDRGDNGYRCRWARMGGQSHDGTTEWKETWWEKSDWTGYKELGAEKSGKNGAGDSWWEKWKEVLYQDEWSNLARIERSAEKQAKSGAENAGWYEKWWEKYDAKGWTEKGAHKYGRLNEQSWWERWGEHYDGRGFVLKWTDKWAETDLGTKWGDKWEEKFFAGIGSRQGETWHVSPGGDRWSRTWGEEHFGNGKVHKYGKSTTGESWDLVVDEETYYEAEPHYGWADVVGDSTQLLSIQPVERPPGVYPTIDFSASSPAPPSDDPPGMPPSPLE.

A chloroplast-targeting transit peptide spans 1–19 (MAACSRGLVARPFDLTARG). Disordered regions lie at residues 65-126 (GNKP…DTGI) and 403-431 (GVYPTIDFSASSPAPPSDDPPGMPPSPLE). Pro residues predominate over residues 415 to 431 (PAPPSDDPPGMPPSPLE).

This sequence belongs to the ESV1 family.

Its subcellular location is the plastid. The protein resides in the chloroplast stroma. Functionally, binds preferentially to highly ordered alpha-glucans, such as starch and crystalline maltodextrins. Involved in the organization of the starch granule matrix, thus influencing starch turnover by modulating the accessibility of starch polymers to modifying and degrading enzymes. Required for the control of starch degradation in leaves and starch distribution in nonphotosynthetic parts. Promotes gravitropic responses, negative in shoots but positive in roots, by facilitating starch granules (statoliths) formation in hypocotyls and roots columella. Facilitates tight packing of starch granules in grains. The sequence is that of Protein EARLY STARVATION 1, chloroplastic from Oryza sativa subsp. indica (Rice).